A 186-amino-acid polypeptide reads, in one-letter code: Single-stranded DNA-binding protein 1 (186 aa).

Positions methionine 1–leucine 108 constitute an SSB domain. Residues threonine 119–phenylalanine 186 are disordered. The span at serine 175–phenylalanine 186 shows a compositional bias: acidic residues.

As to quaternary structure, homotetramer.

The chain is Single-stranded DNA-binding protein 1 (ssb1) from Tropheryma whipplei (strain Twist) (Whipple's bacillus).